Reading from the N-terminus, the 273-residue chain is 4-hydroxy-tetrahydrodipicolinate reductase (273 aa).

Residues 8–13 (GAAGRM), Glu34, 102–104 (GTT), and 128–131 (SSNM) each bind NAD(+). The active-site Proton donor/acceptor is His160. His161 is a binding site for (S)-2,3,4,5-tetrahydrodipicolinate. Lys164 acts as the Proton donor in catalysis. 170–171 (GT) provides a ligand contact to (S)-2,3,4,5-tetrahydrodipicolinate.

It belongs to the DapB family.

It localises to the cytoplasm. The catalysed reaction is (S)-2,3,4,5-tetrahydrodipicolinate + NAD(+) + H2O = (2S,4S)-4-hydroxy-2,3,4,5-tetrahydrodipicolinate + NADH + H(+). It catalyses the reaction (S)-2,3,4,5-tetrahydrodipicolinate + NADP(+) + H2O = (2S,4S)-4-hydroxy-2,3,4,5-tetrahydrodipicolinate + NADPH + H(+). It functions in the pathway amino-acid biosynthesis; L-lysine biosynthesis via DAP pathway; (S)-tetrahydrodipicolinate from L-aspartate: step 4/4. Catalyzes the conversion of 4-hydroxy-tetrahydrodipicolinate (HTPA) to tetrahydrodipicolinate. The polypeptide is 4-hydroxy-tetrahydrodipicolinate reductase (Methanobrevibacter smithii (strain ATCC 35061 / DSM 861 / OCM 144 / PS)).